The primary structure comprises 407 residues: MDNVLQVDSDLFPNISTNTSEPNQFVQPAWQIVLWAAAYTVIVVTSVVGNVVVMWIILAHKRMRTVTNYFLVNLAFAEASMAAFNTVVNFTYAVHNEWYYGLFYCKFHNFFPIAAVFASIYSMTAVAFDRYMAIIHPLQPRLSATATKVVICVIWVLALLLAFPQGYYSTTETMPNRVVCMIEWPEHPNKIYEKVYHICVTVLIYFLPLLVIGYAYTVVGITLWASEIPGDSSDRYHEQVSAKRKVVKMMIVVVCTFAICWLPFHIFFLLPYINPDLYLEKFIQQVYLAIMWLAMSSTMYNPIIYCCLNDRFRLGFKHAFRCCPFISAGDYEGLEMKSTRYLQTQGSVYKVSRLETTVSTVVGAHEEELEDGPKTTPSSLDLTSNGSSRSDSKTMTESFSFYSNMLS.

The Extracellular segment spans residues 1–31; sequence MDNVLQVDSDLFPNISTNTSEPNQFVQPAWQ. N14 and N18 each carry an N-linked (GlcNAc...) asparagine glycan. Residues 32 to 54 form a helical membrane-spanning segment; the sequence is IVLWAAAYTVIVVTSVVGNVVVM. The Cytoplasmic portion of the chain corresponds to 55–64; sequence WIILAHKRMR. The helical transmembrane segment at 65 to 86 threads the bilayer; sequence TVTNYFLVNLAFAEASMAAFNT. The Extracellular portion of the chain corresponds to 87–106; sequence VVNFTYAVHNEWYYGLFYCK. A disulfide bond links C105 and C180. Residues 107-128 form a helical membrane-spanning segment; that stretch reads FHNFFPIAAVFASIYSMTAVAF. Residues 129 to 148 are Cytoplasmic-facing; it reads DRYMAIIHPLQPRLSATATK. Residues 149–169 form a helical membrane-spanning segment; it reads VVICVIWVLALLLAFPQGYYS. The Extracellular segment spans residues 170–194; sequence TTETMPNRVVCMIEWPEHPNKIYEK. The helical transmembrane segment at 195-219 threads the bilayer; the sequence is VYHICVTVLIYFLPLLVIGYAYTVV. Residues 220–248 lie on the Cytoplasmic side of the membrane; sequence GITLWASEIPGDSSDRYHEQVSAKRKVVK. The helical transmembrane segment at 249–270 threads the bilayer; it reads MMIVVVCTFAICWLPFHIFFLL. Over 271–283 the chain is Extracellular; the sequence is PYINPDLYLEKFI. A helical transmembrane segment spans residues 284–308; that stretch reads QQVYLAIMWLAMSSTMYNPIIYCCL. Over 309 to 407 the chain is Cytoplasmic; sequence NDRFRLGFKH…SFSFYSNMLS (99 aa). A lipid anchor (S-palmitoyl cysteine) is attached at C322. The interval 365–394 is disordered; sequence HEEELEDGPKTTPSSLDLTSNGSSRSDSKT. The segment covering 375-394 has biased composition (polar residues); the sequence is TTPSSLDLTSNGSSRSDSKT.

The protein belongs to the G-protein coupled receptor 1 family. As to quaternary structure, interacts with ARRB1.

The protein localises to the cell membrane. Functionally, this is a receptor for the tachykinin neuropeptide substance P. It is probably associated with G proteins that activate a phosphatidylinositol-calcium second messenger system. This is Substance-P receptor (TACR1) from Canis lupus familiaris (Dog).